The primary structure comprises 202 residues: Precorrin-2 dehydrogenase (202 aa).

NAD(+) is bound by residues 20–21 (TI) and 41–42 (PT).

This sequence belongs to the precorrin-2 dehydrogenase / sirohydrochlorin ferrochelatase family. In terms of assembly, homodimer.

The catalysed reaction is precorrin-2 + NAD(+) = sirohydrochlorin + NADH + 2 H(+). It functions in the pathway cofactor biosynthesis; adenosylcobalamin biosynthesis; sirohydrochlorin from precorrin-2: step 1/1. Its pathway is porphyrin-containing compound metabolism; siroheme biosynthesis; sirohydrochlorin from precorrin-2: step 1/1. Functionally, catalyzes the dehydrogenation of precorrin-2 to form sirohydrochlorin which is used as a precursor in both siroheme biosynthesis and in the anaerobic branch of adenosylcobalamin biosynthesis. It is unable to oxidize precorrin-3. This chain is Precorrin-2 dehydrogenase (sirC), found in Priestia megaterium (Bacillus megaterium).